Reading from the N-terminus, the 190-residue chain is MDVRTLAVGKAHLEALLATRKMTLEHLQDVRHDATQVYFDGLEHLQNVAQYLAIPLSEFFVGQTQSDLDDGVKIARRNGGFKREEIRGGVHYYTYEHLVTTNQDPGLMALRLDLHSDDEQPLRLNGGHGSREIVYVTRGAVRVRWVGDNDELKEDVLNEGDSIFILPNVPHSFTNHVGGAKSEIIAINYG.

Residues 10–60 (KAHLEALLATRKMTLEHLQDVRHDATQVYFDGLEHLQNVAQYLAIPLSEFF) enclose the HTH cro/C1-type domain. Residues 20-40 (RKMTLEHLQDVRHDATQVYFD) constitute a DNA-binding region (H-T-H motif). Residues Arg-87, Tyr-95, 125 to 128 (NGGH), and Glu-132 contribute to the substrate site. Fe cation is bound by residues His-128, Glu-132, and His-171. Residues 128–176 (HGSREIVYVTRGAVRVRWVGDNDELKEDVLNEGDSIFILPNVPHSFTNH) enclose the Cupin type-2 domain.

This sequence belongs to the non-heme iron-dependent dioxygenase family. In terms of assembly, homotrimer. It depends on Fe(2+) as a cofactor.

It catalyses the reaction (S)-2-hydroxypropylphosphonate + H2O2 = (1R,2S)-epoxypropylphosphonate + 2 H2O. Its pathway is antibiotic biosynthesis; fosfomycin biosynthesis. Its function is as follows. Non-heme-dependent dioxygenase that catalyzes the oxidative epoxidation of (S)-2-hydroxypropylphosphonate into (1R,2S)-epoxypropylphosphonate, the final step in the biosynthesis of fosfomycin antibiotic. The chain is (S)-2-hydroxypropylphosphonic acid epoxidase (hppE) from Pseudomonas syringae.